The chain runs to 107 residues: Essential MCU regulator, mitochondrial (107 aa).

The transit peptide at 1–47 directs the protein to the mitochondrion; sequence MASTAARRLAWVAVRPGALWSGPRGRRGGDVYTVPGSSGLSQVPSRS. At 48 to 65 the chain is on the mitochondrial matrix side; that stretch reads VIVTRSGAILPKPVKMSF. The chain crosses the membrane as a helical span at residues 66 to 85; that stretch reads GLLRVFSIVIPFLYVGTLIS. The GXXXX[G/A/S] motif lies at 81–85; the sequence is GTLIS. Topologically, residues 86–107 are mitochondrial intermembrane; the sequence is KNFAALLEEHDIFVPEDDDDDD.

Belongs to the SMDT1/EMRE family. Component of the uniplex complex, composed of MCU, EMRE/SMDT1, MICU1 and MICU2 (or MICU3) in a 4:4:1:1 stoichiometry. The number of EMRE/SMDT1 molecules is hovewer variable, ranging from 1 to 4 copies per uniplex complex, leading to uniplex complexes with distinct gatekeeping profiles. Interacts (via its C-terminal poly-Asp tail) with MCUR1; the interaction is direct. Unprocessed form interacts (via transit peptide) with MAIP1. In terms of processing, undergoes proteolytic degradation in neurons: degraded by AFG3L2 and SPG7 before SMDT1/EMRE assembly with the uniporter complex, limiting the availability of SMDT1/EMRE for MCU assembly and promoting efficient assembly of gatekeeper subunits with MCU. As to expression, widely expressed.

It is found in the mitochondrion inner membrane. Its function is as follows. Essential regulatory subunit of the mitochondrial calcium uniporter complex (uniplex), a complex that mediates calcium uptake into mitochondria. Required to bridge the calcium-sensing proteins MICU1 with the calcium-conducting subunit MCU. Acts by mediating activation of MCU and retention of MICU1 to the MCU pore, in order to ensure tight regulation of the uniplex complex and appropriate responses to intracellular calcium signaling. The polypeptide is Essential MCU regulator, mitochondrial (Mus musculus (Mouse)).